We begin with the raw amino-acid sequence, 286 residues long: Isopentenyl-diphosphate Delta-isomerase II (286 aa).

The Nudix hydrolase domain occupies 104–256; that stretch reads MLHRAFSVFL…GLKLSPWFRL (153 aa). Residues C141 and E203 contribute to the active site.

Belongs to the IPP isomerase type 1 family.

It catalyses the reaction isopentenyl diphosphate = dimethylallyl diphosphate. It participates in isoprenoid biosynthesis; dimethylallyl diphosphate biosynthesis; dimethylallyl diphosphate from isopentenyl diphosphate: step 1/1. The protein operates within porphyrin-containing compound metabolism; chlorophyll biosynthesis. Catalyzes the 1,3-allylic rearrangement of the homoallylic substrate isopentenyl (IPP) to its highly electrophilic allylic isomer, dimethylallyl diphosphate (DMAPP). In Clarkia breweri (Fairy fans), this protein is Isopentenyl-diphosphate Delta-isomerase II (IPI2).